Consider the following 36-residue polypeptide: Photosystem II reaction center protein M (36 aa).

Residues 5–25 (ILGVIAVALFILIPTSFLLIL) traverse the membrane as a helical segment.

It belongs to the PsbM family. As to quaternary structure, PSII is composed of 1 copy each of membrane proteins PsbA, PsbB, PsbC, PsbD, PsbE, PsbF, PsbH, PsbI, PsbJ, PsbK, PsbL, PsbM, PsbT, PsbY, PsbZ, Psb30/Ycf12, at least 3 peripheral proteins of the oxygen-evolving complex and a large number of cofactors. It forms dimeric complexes.

The protein localises to the plastid. The protein resides in the chloroplast thylakoid membrane. In terms of biological role, one of the components of the core complex of photosystem II (PSII). PSII is a light-driven water:plastoquinone oxidoreductase that uses light energy to abstract electrons from H(2)O, generating O(2) and a proton gradient subsequently used for ATP formation. It consists of a core antenna complex that captures photons, and an electron transfer chain that converts photonic excitation into a charge separation. This subunit is found at the monomer-monomer interface. In Bigelowiella natans (Pedinomonas minutissima), this protein is Photosystem II reaction center protein M.